The chain runs to 184 residues: dCTP deaminase (184 aa).

DCTP is bound at residue 107–112; sequence KSTYAR. Glutamate 133 (proton donor/acceptor) is an active-site residue. The dCTP site is built by glutamine 152, tyrosine 166, and glutamine 176.

It belongs to the dCTP deaminase family. Homotrimer.

The catalysed reaction is dCTP + H2O + H(+) = dUTP + NH4(+). The protein operates within pyrimidine metabolism; dUMP biosynthesis; dUMP from dCTP (dUTP route): step 1/2. In terms of biological role, catalyzes the deamination of dCTP to dUTP. This is dCTP deaminase from Granulibacter bethesdensis (strain ATCC BAA-1260 / CGDNIH1).